Consider the following 148-residue polypeptide: Trypsin inhibitor CMe (148 aa).

Positions 1-24 are cleaved as a signal peptide; the sequence is MAFKYQLLLSAAVMLAILVATATS.

Belongs to the protease inhibitor I6 (cereal trypsin/alpha-amylase inhibitor) family. Post-translationally, five disulfide bonds, which are essential for the inhibitor activity, are probably present. In terms of tissue distribution, expressed in the developing endosperm. Not detected in embryo, aleurone, coleoptile, roots and leaves.

It localises to the secreted. Inhibits trypsin in vitro. Probably plays a protective role through inhibition of insect midgut proteases. This chain is Trypsin inhibitor CMe (ITR1), found in Hordeum vulgare (Barley).